Here is a 1340-residue protein sequence, read N- to C-terminus: Early transcription factor large subunit homolog (1340 aa).

Its subcellular location is the virion. Its function is as follows. Putative initation factor. This chain is Early transcription factor large subunit homolog, found in Ornithodoros (relapsing fever ticks).